The primary structure comprises 535 residues: Heat shock factor protein 2 (535 aa).

Residues K2, K82, K135, K139, K151, K210, K218, and K237 each participate in a glycyl lysine isopeptide (Lys-Gly) (interchain with G-Cter in SUMO2) cross-link. A DNA-binding region spans residues 7 to 112 (VPAFLSKLWT…LLENIKRKVS (106 aa)). A hydrophobic repeat HR-A/B region spans residues 119–192 (NKIRQEDLTK…VTLVQNNQLV (74 aa)). The tract at residues 298–325 (QSGEQSEPAREPLRVGSAGSSSPLMSSA) is disordered. A compositionally biased stretch (low complexity) spans 313–325 (GSAGSSSPLMSSA). The hydrophobic repeat HR-C stretch occupies residues 359-384 (LLDYLDSIDCSLEDFQAMLSGRQFSI). Positions 418–437 (TKSSVVQHVSEEGRKSKSKP) are disordered. Residues 426–437 (VSEEGRKSKSKP) are compositionally biased toward basic and acidic residues.

This sequence belongs to the HSF family. As to quaternary structure, DNA-binding homotrimer in stressed or heat shocked cells, otherwise found as a homodimer. Isoform alpha is expressed predominantly in testis while isoform beta is expressed predominantly in heart and brain.

The protein localises to the cytoplasm. Its subcellular location is the nucleus. Functionally, DNA-binding protein that specifically binds heat shock promoter elements (HSE) and activates transcription. In higher eukaryotes, HSF is unable to bind to the HSE unless the cells are heat shocked. HSF2 is expressed in a form that binds DNA constitutively but loses DNA binding by incubation at greater than 41 degrees C. This is Heat shock factor protein 2 (Hsf2) from Mus musculus (Mouse).